A 182-amino-acid polypeptide reads, in one-letter code: MIRAFLVVALASVAVFSAPIPEVPQNFDDIPAEYKGLIPAEVAEHLKAITAEEKAALKELAQNHKEYKTEEEFKAALKEKSPSLYEKAGKLEALLTAKFEKLDATAQALVKKIIAKGRELHQQYLAGDKPTLDSLKELAKGYIAEYKALSDDAKATITAEFPILTGFFQNEKIQAIVGQYVN.

The first 17 residues, 1–17 (MIRAFLVVALASVAVFS), serve as a signal peptide directing secretion. Coiled-coil stretches lie at residues 46 to 73 (LKAI…EEEF) and 131 to 152 (TLDS…LSDD).

The protein belongs to the fatty-acid and retinol-binding protein (FARBP) family.

Its subcellular location is the secreted. Probably binds lipids. This is Fatty-acid and retinol-binding protein 2 (far-2) from Caenorhabditis elegans.